Here is a 1517-residue protein sequence, read N- to C-terminus: MLPTSLKTLVLLGALLTGPLGPAGGQDAPSLPREVQRYDGWFNNLKYHQRGAAGSQLRRLVPANYADGVYQALQEPLLPNARLLSDAVSKGKAGLPSAHNRTVLGLFFGYHVLSDLVSVETPGCPAEFLNIYIPRGDPVFDPDKRGNVVLPFQRSRWDRSTGQSPSNPRDLTNQVTGWLDGSAIYGSSHSWSDTLRSFSGGQLASGPDPAFPRNSQNSLLMWMAPDPATGQGGPQGLYAFGAQRGNREPFLQALGLLWFRYHNLCAKRLAQEHPHWGDEELFQHARKRVIATYQNIALYQWLPSFLQKTPPEYSGYRPFMDPSISPEFVAASEQFLSTMVPPGVYMRNSSCHFREFPKEGSSSSPALRVCNNYWIRENPSLKTAQDVDQLLLGMASQISELEDRIVIEDLRDYWPGPDRYSRTDYVASSIQSGRDMGLPSYSQALQALGLEPPKNWSALNPKVDPQVLEATAALYNQDLSRLELFLGGLLESHGDPGPLFSNIILDQFVRLRDGDRYWFENTRNGLFSKEEIAEIRNTTLRDVLVAVSNVDPSALQPNVFFWQEGAPCPQPQQLTTEGLPQCVPVTVIDYFEGSGAGYGVTLLAVCCFPVVSLIIAWVVARFRNRERKMLLKKGKESLKKQTASDGVPAMEWPGPKESSYPVTVQLLPDRSLKVLDKRLTVLRTIQLQPTQQVNLILSSSHGRRTLLLKIPKEYDLVLMFNSEEDRDAFVQLLQDLCVCSTPGLRIAEMDEKELLRKAVTKQQRAGILEIFFRQLFAQVLDINQADAGTLPLDSSQQVREALTCELSRAEFADSLGLKPQDMFVESMFSLADKDGNGYISFREFLDILVVFMKGSPQDKSRLMFTMYDLDGNGFLSKEEFFTMMRSFIEISNNCLSKDQLAEVVESMFRESGFQDKEELTWEDFHFMLRDHDSDLRFTQLCVKGGAGGTGDIFKQSNACRVSFLTRTPGNRVMAPSPRLYTEALQEKMQRGFLAQKLKQFKRFVENYRRHIVCVTIFSAICAGLFADRAYYYGFASPPTDIEETTYVGIILSRGTAASISFMFSYILLTMCRNLITFLRETFLNRYIPFDAAVDFHRWIAMAAVVLAVVHSLGHAVNVYIFSVSPLSLMTCVFPSVFVNDGSKLPPKYYWWFFETVPGMTGVLLLLVLAIMYVFASHHFRRHSFRGFWLTHHLYVVLYALIIIHGSYALIQLPSFHIYFLVPAIIYVGDKLVSLSRKKVEISVVKVELLPSGVTYLQFQRPKTFEYKSGQWVRIACLSLGTNEYHPFTLTSAPHEDTLSLHIRAVGPWTTRLREIYSPPVGGTSARYPKLYLDGPFGEGHQEWHKFEVSVLVGGGIGVTPFASILKDLVFKSSMGTQMLCKKIYFIWVTRTQRQFEWLADIIREVEENGSRDLVSVHIYITQLAEKFDLRTTMLYICERHFQKVLNRSLFTGLRSVTHFGRPPFELFLDSLQEVHPQVHKIGVFSCGPPGMTKNVEKACQLINRQDRAHFVHHYENF.

The N-terminal stretch at 1–25 (MLPTSLKTLVLLGALLTGPLGPAGG) is a signal peptide. Residues 26–599 (QDAPSLPREV…YFEGSGAGYG (574 aa)) lie on the Extracellular side of the membrane. A peroxidase-like; mediates peroxidase activity region spans residues 30-596 (SLPREVQRYD…VIDYFEGSGA (567 aa)). 4 N-linked (GlcNAc...) asparagine glycosylation sites follow: N100, N348, N455, and N537. C124 and C1131 are oxidised to a cystine. The helical transmembrane segment at 600 to 620 (VTLLAVCCFPVVSLIIAWVVA) threads the bilayer. The Cytoplasmic segment spans residues 621–1010 (RFRNRERKML…KRFVENYRRH (390 aa)). EF-hand domains lie at 819 to 854 (PQDM…FMKG), 855 to 890 (SPQD…FIEI), and 899 to 934 (QLAE…HDSD). Ca(2+) is bound by residues D832, D834, N836, Y838, E843, D868, D870, N872, and E879. Positions 960-1214 (RVSFLTRTPG…GSYALIQLPS (255 aa)) are interaction with TXNDC11. A helical transmembrane segment spans residues 1011-1031 (IVCVTIFSAICAGLFADRAYY). Residues 1032-1046 (YGFASPPTDIEETTY) lie on the Extracellular side of the membrane. Residues 1047–1067 (VGIILSRGTAASISFMFSYIL) traverse the membrane as a helical segment. One can recognise a Ferric oxidoreductase domain in the interval 1053-1235 (RGTAASISFM…YVGDKLVSLS (183 aa)). At 1068–1100 (LTMCRNLITFLRETFLNRYIPFDAAVDFHRWIA) the chain is on the cytoplasmic side. Residues 1101 to 1121 (MAAVVLAVVHSLGHAVNVYIF) traverse the membrane as a helical segment. Residues 1122 to 1154 (SVSPLSLMTCVFPSVFVNDGSKLPPKYYWWFFE) lie on the Extracellular side of the membrane. A helical membrane pass occupies residues 1155–1175 (TVPGMTGVLLLLVLAIMYVFA). The Cytoplasmic segment spans residues 1176-1185 (SHHFRRHSFR). The helical transmembrane segment at 1186–1206 (GFWLTHHLYVVLYALIIIHGS) threads the bilayer. Position 1207 (Y1207) is a topological domain, extracellular. The chain crosses the membrane as a helical span at residues 1208–1228 (ALIQLPSFHIYFLVPAIIYVG). The Cytoplasmic segment spans residues 1229 to 1517 (DKLVSLSRKK…AHFVHHYENF (289 aa)). Residues 1236-1342 (RKKVEISVVK…DGPFGEGHQE (107 aa)) enclose the FAD-binding FR-type domain.

This sequence in the N-terminal section; belongs to the peroxidase family. As to quaternary structure, heterodimer with DUOXA2; disulfide-linked. Interacts with TXNDC11, TPO and CYBA. N-glycosylated. As to expression, expressed in colon, duodenum, rectum and thyroid.

The protein resides in the apical cell membrane. Its subcellular location is the cell junction. The enzyme catalyses NADH + O2 + H(+) = H2O2 + NAD(+). The catalysed reaction is NADPH + O2 + H(+) = H2O2 + NADP(+). It functions in the pathway hormone biosynthesis; thyroid hormone biosynthesis. The NADPH oxidase activity is calcium-dependent. Peroxidase activity is inhibited by aminobenzohydrazide. Functionally, generates hydrogen peroxide which is required for the activity of thyroid peroxidase/TPO and lactoperoxidase/LPO. Plays a role in thyroid hormones synthesis and lactoperoxidase-mediated antimicrobial defense at the surface of mucosa. May have its own peroxidase activity through its N-terminal peroxidase-like domain. The polypeptide is Dual oxidase 2 (Duox2) (Rattus norvegicus (Rat)).